Here is a 354-residue protein sequence, read N- to C-terminus: Ribosomal RNA large subunit methyltransferase M (354 aa).

S-adenosyl-L-methionine is bound by residues S183, 216 to 219, D235, D255, and D271; that span reads SPGG. The active-site Proton acceptor is K300.

The protein belongs to the class I-like SAM-binding methyltransferase superfamily. RNA methyltransferase RlmE family. RlmM subfamily. In terms of assembly, monomer.

The protein localises to the cytoplasm. It carries out the reaction cytidine(2498) in 23S rRNA + S-adenosyl-L-methionine = 2'-O-methylcytidine(2498) in 23S rRNA + S-adenosyl-L-homocysteine + H(+). In terms of biological role, catalyzes the 2'-O-methylation at nucleotide C2498 in 23S rRNA. The chain is Ribosomal RNA large subunit methyltransferase M from Pseudomonas putida (strain ATCC 700007 / DSM 6899 / JCM 31910 / BCRC 17059 / LMG 24140 / F1).